The sequence spans 487 residues: Beta-barrel assembly-enhancing protease (487 aa).

A signal peptide spans 1-27 (MFRQLKKNLVATLIAAMTIGQVAPAFA). His136 contacts Zn(2+). The active site involves Glu137. 2 residues coordinate Zn(2+): His140 and Glu201. The Proton donor role is filled by Asp205. TPR repeat units lie at residues 309-342 (RAAQ…EPGN), 344-376 (WYLD…RTNP), 377-409 (VLQL…NKDD), and 427-460 (DQEL…VKLG).

The protein belongs to the peptidase M48 family. BepA subfamily. As to quaternary structure, interacts with BamA and LoiP. Zn(2+) is required as a cofactor.

It localises to the periplasm. Protease activity is inhibited by the metal chelating reagents 1,10-phenanthroline and EDTA. Functionally, functions both as a chaperone and a metalloprotease. Maintains the integrity of the outer membrane by promoting either the assembly or the elimination of outer membrane proteins, depending on their folding state. Promotes disulfide rearrangement of LptD during its biogenesis, and proteolytic degradation of LptD and BamA when their proper assembly is compromised. May facilitate membrane attachment of LoiP under unfavorable conditions. The chain is Beta-barrel assembly-enhancing protease from Escherichia coli (strain K12).